A 160-amino-acid chain; its full sequence is Putative pre-16S rRNA nuclease (160 aa).

It belongs to the YqgF nuclease family.

It is found in the cytoplasm. Its function is as follows. Could be a nuclease involved in processing of the 5'-end of pre-16S rRNA. The polypeptide is Putative pre-16S rRNA nuclease (Rhodopseudomonas palustris (strain BisB5)).